The following is a 117-amino-acid chain: Large ribosomal subunit protein uL24 (117 aa).

Positions 1–10 are enriched in basic residues; sequence MSKQPRKQRK. The segment at 1-28 is disordered; that stretch reads MSKQPRKQRKALYNAPAHARGKHMSATL.

This sequence belongs to the universal ribosomal protein uL24 family. As to quaternary structure, part of the 50S ribosomal subunit.

In terms of biological role, one of two assembly initiator proteins, it binds directly to the 5'-end of the 23S rRNA, where it nucleates assembly of the 50S subunit. Functionally, located at the polypeptide exit tunnel on the outside of the subunit. The chain is Large ribosomal subunit protein uL24 from Methanobrevibacter smithii (strain ATCC 35061 / DSM 861 / OCM 144 / PS).